A 171-amino-acid chain; its full sequence is 16S rRNA aminocarboxypropyltransferase (171 aa).

Residues Thr-18, Leu-68, Leu-91, and Ser-110 each contribute to the S-adenosyl-L-methionine site.

This sequence belongs to the TDD superfamily. TSR3 family.

The protein resides in the cytoplasm. The catalysed reaction is an N(1)-methylpseudouridine in rRNA + S-adenosyl-L-methionine = N(1)-methyl-N(3)-[(3S)-3-amino-3-carboxypropyl]pseudouridine in rRNA + S-methyl-5'-thioadenosine + H(+). Its function is as follows. Aminocarboxypropyltransferase that catalyzes the aminocarboxypropyl transfer on pseudouridine corresponding to position 914 in M.jannaschii 16S rRNA. It constitutes the last step in biosynthesis of the hypermodified N1-methyl-N3-(3-amino-3-carboxypropyl) pseudouridine (m1acp3-Psi). The polypeptide is 16S rRNA aminocarboxypropyltransferase (Methanosphaera stadtmanae (strain ATCC 43021 / DSM 3091 / JCM 11832 / MCB-3)).